We begin with the raw amino-acid sequence, 241 residues long: MDAKKAVRVAVVEQVGYREWTEELGSDREWIIQTLQSDIYAAAQKEAAGYGGFVLPIRYDIMLLISSNMGVQEHARVLDAIAGLSKVKVRMASYCGVKPLDAVERAWNALRRREERLIYERCEGEEYTAIAHIDLNNVTAITRAEGPVRTYYEVMDLMAKISKVAEKIGAITQYLGGDNILAVLPLNGSVKETVDMLLVRSDLKAGIGIAPTARASLALAAEALHEIRSKINPGPLVVKAQ.

It belongs to the archaeal-type GTP cyclohydrolase family.

It carries out the reaction GTP + 3 H2O = 2-amino-5-formylamino-6-(5-phospho-D-ribosylamino)pyrimidin-4(3H)-one + 2 phosphate + 2 H(+). Catalyzes the formation of 2-amino-5-formylamino-6-ribofuranosylamino-4(3H)-pyrimidinone ribonucleotide monophosphate and inorganic phosphate from GTP. Also has an independent pyrophosphate phosphohydrolase activity. This Aeropyrum pernix (strain ATCC 700893 / DSM 11879 / JCM 9820 / NBRC 100138 / K1) protein is GTP cyclohydrolase III.